The primary structure comprises 424 residues: MHEPMKTLKNIHAEIRICQKFPKSTVQKRFSEFEELIKAASKNARNWKPISSVELFQGDSSLNELFEKLVIGTCELRDGELFENVNDLTINPSNIHVYKLHKDGPLSQNIGDDDGDESIIGSQLWQLPCVEFDSIWENLIYDSNLKNEVMSYVAALARLSEKHVNTKIINVNRLILLTGPPGTGKTSLCKGLAQHLSIRMNDKYSKSVMLEINSHSLFSKWFSESGKLVQKMFDQIDELAEDEKCMVFVLIDEVESLGMCRESSSSRSEPSDAIRAVNALLTQIDRIRRRDNVLILCTSNLESTLDKALVDRADIVKNVGQPSDFARYSMLKSSIMELARIGVVIDNEVHTDYWPQDICDTKAPRNEFTEILFKIAQEARGLSGRAISMLPTLVYSKSPEETITLPNCMNLFLEAVKERLSRNN.

Position 179–186 (179–186 (GPPGTGKT)) interacts with ATP.

This sequence belongs to the AAA ATPase family. PCH2 subfamily.

Plays a key role in chromosome recombination during meiosis. The sequence is that of Putative pachytene checkpoint protein 2 (pch-2) from Caenorhabditis elegans.